Reading from the N-terminus, the 761-residue chain is 3'-5' RNA nuclease TATDN2 (761 aa).

Disordered stretches follow at residues methionine 1–glycine 90, cysteine 135–glutamine 181, lysine 197–valine 294, lysine 318–glutamate 337, arginine 343–threonine 364, and serine 388–histidine 486. Composition is skewed to low complexity over residues alanine 33 to proline 52 and serine 66 to serine 85. Basic and acidic residues predominate over residues glutamine 247–valine 294. Residues serine 388–serine 402 are compositionally biased toward low complexity. The span at serine 417 to serine 431 shows a compositional bias: polar residues. A compositionally biased stretch (basic and acidic residues) spans arginine 452–proline 470. Residues histidine 499, histidine 501, glutamate 593, histidine 630, histidine 655, and aspartate 707 each coordinate a divalent metal cation.

It belongs to the metallo-dependent hydrolases superfamily. TatD-type hydrolase family. Mg(2+) serves as cofactor.

It is found in the nucleus. Functionally, mg(2+)-dependent 3'RNA exonuclease and endonuclease that resolves R-loops via specific degradation of R-loop RNA stucture. Shows no activity against D-loop and minimal activity against the RNA strand of an RNA-DNA hybrid duplex oligomer. Has no 3' or 5' exonuclease activity, no uracil glycosylase activity, and no 5' flap endonuclease activity on DNA substrates. May have a role in maintaining genomic stability through its role in R-loop resolution. This chain is 3'-5' RNA nuclease TATDN2 (TATDN2), found in Homo sapiens (Human).